A 913-amino-acid chain; its full sequence is Collagen alpha-2(I) chain (913 aa).

The interval 1-913 (SGGFDFSFLP…FGYEGDFYRA (913 aa)) is disordered. Residues Pro-10, Pro-13, Pro-35, and Pro-41 each carry the 4-hydroxyproline modification. Composition is skewed to low complexity over residues 28-67 (LMGP…ARGP), 125-154 (VGAP…SAGP), and 199-220 (PGAN…AGAP). Positions 254–263 (GESGGKGEPG) are enriched in gly residues. A compositionally biased stretch (low complexity) spans 264-274 (SAGPQGPPGSS). The segment covering 281-303 (GPNGGSTGPTGPPGLRGGPGSRG) has biased composition (gly residues). Residues 316-332 (PAGARGASGPAGVRGPS) are compositionally biased toward low complexity. Pro-338 and Pro-341 each carry 4-hydroxyproline. 2 stretches are compositionally biased toward low complexity: residues 367–386 (LPGI…RGEA) and 408–421 (PDGN…PGLQ). Residues 422-431 (GVQGGKGTTG) show a composition bias toward gly residues. Low complexity-rich tracts occupy residues 459 to 476 (PGES…SRGP) and 488 to 498 (EPGVVGAPGTA). Gly residues predominate over residues 499-517 (GPAGSGGPGERGAAGIPGG). Low complexity-rich tracts occupy residues 527–574 (RGEV…PRGS) and 581–601 (VGPA…QPGA). Residues 602–611 (KGERGTKGPK) show a composition bias toward basic and acidic residues. A compositionally biased stretch (low complexity) spans 619 to 629 (PTGPVGSAGPA). Positions 639–648 (GSRGDGGPPG) are enriched in gly residues. The segment covering 650–659 (TGFPGAAGRT) has biased composition (low complexity). The span at 696–705 (GETGAGGPPG) shows a compositional bias: gly residues. Low complexity-rich tracts occupy residues 713–740 (SGEP…LGLP) and 748–758 (LPGVAGAVGEP). Gly residues predominate over residues 759-776 (GPLGIGPPGARGPSGAGK). Low complexity predominate over residues 782–797 (EPGPVGSVGPVGALGP). Basic and acidic residues predominate over residues 807–818 (RGDKGEPGEKGP). Pro residues predominate over residues 883–895 (SGPPGPPGPPGPP).

It belongs to the fibrillar collagen family. In terms of assembly, trimers of one alpha 2(I) and two alpha 1(I) chains. Interacts (via C-terminus) with TMEM131 (via PapD-L domain); the interaction is direct and is involved in assembly and TRAPPIII ER-to-Golgi transport complex-dependent secretion of collagen. Post-translationally, prolines at the third position of the tripeptide repeating unit (G-X-Y) are hydroxylated in some or all of the chains. Expressed in bones.

It is found in the secreted. It localises to the extracellular space. Its subcellular location is the extracellular matrix. Type I collagen is a member of group I collagen (fibrillar forming collagen). This Parocnus serus (Greater Haitian ground sloth) protein is Collagen alpha-2(I) chain.